Consider the following 406-residue polypeptide: Cysteine desulfurase (406 aa).

N6-(pyridoxal phosphate)lysine is present on lysine 226. Cysteine 364 (cysteine persulfide intermediate) is an active-site residue.

This sequence belongs to the class-V pyridoxal-phosphate-dependent aminotransferase family. Csd subfamily. In terms of assembly, homodimer. Interacts with SufE and the SufBCD complex composed of SufB, SufC and SufD. The interaction with SufE is required to mediate the direct transfer of the sulfur atom from the S-sulfanylcysteine. It depends on pyridoxal 5'-phosphate as a cofactor.

The protein resides in the cytoplasm. The enzyme catalyses (sulfur carrier)-H + L-cysteine = (sulfur carrier)-SH + L-alanine. It carries out the reaction L-selenocysteine + AH2 = hydrogenselenide + L-alanine + A + H(+). Its pathway is cofactor biosynthesis; iron-sulfur cluster biosynthesis. Cysteine desulfurases mobilize the sulfur from L-cysteine to yield L-alanine, an essential step in sulfur metabolism for biosynthesis of a variety of sulfur-containing biomolecules. Component of the suf operon, which is activated and required under specific conditions such as oxidative stress and iron limitation. Acts as a potent selenocysteine lyase in vitro, that mobilizes selenium from L-selenocysteine. Selenocysteine lyase activity is however unsure in vivo. This Escherichia coli O9:H4 (strain HS) protein is Cysteine desulfurase.